The primary structure comprises 491 residues: Iota-carrageenase (491 aa).

A signal peptide spans 1-19 (MKLQFKPVYLASIAIMAIG). Cys422 and Cys490 are disulfide-bonded.

It belongs to the glycosyl hydrolase 82 family.

The protein resides in the secreted. It catalyses the reaction Endohydrolysis of 1,4-beta-D-linkages between D-galactose 4-sulfate and 3,6-anhydro-D-galactose-2-sulfate in iota-carrageenans.. Its function is as follows. Hydrolyzes iota-carrageenans, sulfated 1,3-alpha-1,4-beta galactans from red algal cell walls, with an inversion of anomeric configuration. Also active against hybrid iota-/nu-carrageenan, not active against kappa- or lambda-carrageenans. In Zobellia galactanivorans (strain DSM 12802 / CCUG 47099 / CIP 106680 / NCIMB 13871 / Dsij), this protein is Iota-carrageenase.